The primary structure comprises 396 residues: Dimethyladenosine transferase 2, mitochondrial (396 aa).

The N-terminal 43 residues, 1–43 (MRGPAMRLPPRIALSALARGPSCILGSGAATRKDWQTRNRRGF), are a transit peptide targeting the mitochondrion. Residues 43-71 (FSDFNIEPLPDSDLEESSPWTSRNRSEPT) form a disordered region. S-adenosyl-L-methionine is bound by residues I74, E123, and D149. The tract at residues 328–329 (KR) is DNA-binding.

This sequence belongs to the class I-like SAM-binding methyltransferase superfamily. rRNA adenine N(6)-methyltransferase family. KsgA subfamily. As to quaternary structure, homodimer. Component of the mitochondrial transcription initiation complex, composed at least of TFB2M, TFAM and POLRMT. In this complex TFAM recruits POLRMT to the promoter whereas TFB2M induces structural changes in POLRMT to enable promoter opening and trapping of the DNA non-template strand. Interacts with mitochondrial RNA polymerase POLRMT. Interacts with TFAM. In terms of tissue distribution, ubiquitously expressed.

It is found in the mitochondrion. The enzyme catalyses adenosine in rRNA + S-adenosyl-L-methionine = N(6)-methyladenosine in rRNA + S-adenosyl-L-homocysteine + H(+). In terms of biological role, S-adenosyl-L-methionine-dependent rRNA methyltransferase which may methylate two specific adjacent adenosines in the loop of a conserved hairpin near the 3'-end of 12S mitochondrial rRNA. Component of the mitochondrial transcription initiation complex, composed at least of TFB2M, TFAM and POLRMT that is required for basal transcription of mitochondrial DNA. In this complex, TFAM recruits POLRMT to a specific promoter whereas TFB2M induces structural changes in POLRMT to enable promoter opening and trapping of the DNA non-template strand. Stimulates transcription independently of the methyltransferase activity. This chain is Dimethyladenosine transferase 2, mitochondrial, found in Mus musculus (Mouse).